We begin with the raw amino-acid sequence, 802 residues long: Serine/threonine-protein kinase zyg-8 (802 aa).

Polar residues predominate over residues 1–13; the sequence is MPQTSAWQLNDTT. Positions 1–102 are disordered; it reads MPQTSAWQLN…SAPSTSSAHR (102 aa). Positions 15 to 24 are enriched in pro residues; it reads RPPPPPPPPG. The segment covering 89 to 99 has biased composition (low complexity); the sequence is SPSSSAPSTSS. 2 Doublecortin domains span residues 211–298 and 340–423; these read KRLR…VDYS and RIIK…ADDL. A disordered region spans residues 430 to 470; the sequence is HKSVGSGTSSNMRRTSRRSTMPNRNESLRHDRSGSVIPDQD. Low complexity predominate over residues 434–454; it reads GSGTSSNMRRTSRRSTMPNRN. Residues 482-743 form the Protein kinase domain; that stretch reads FQLVRLIGDG…AGELLNDEWM (262 aa). ATP contacts are provided by residues 488–496 and Lys512; that span reads IGDGNTAVV. The Proton acceptor role is filled by Asp604.

Belongs to the protein kinase superfamily. CAMK Ser/Thr protein kinase family. CaMK subfamily. In terms of assembly, interacts with tac-1. In terms of tissue distribution, expressed in AFD thermosensory neurons. Expressed in cells near the nerve ring, in motor neurons in the ventral nerve cord and in the six touch receptor neurons including ALML/R, PLML/R and AVM and PVM. Expressed in hypodermal and neural tissues and in the germline.

The protein localises to the cytoplasm. Its subcellular location is the cytoskeleton. It localises to the microtubule organizing center. It is found in the centrosome. The protein resides in the spindle. The catalysed reaction is L-seryl-[protein] + ATP = O-phospho-L-seryl-[protein] + ADP + H(+). It catalyses the reaction L-threonyl-[protein] + ATP = O-phospho-L-threonyl-[protein] + ADP + H(+). Probable kinase. Kinase activity may be involved in positioning of spindle poles in meiosis and mitosis. Plays a role in spindle positioning during asymmetric division of one-cell stage embryos. Affects spindle position by promoting microtubule assembly during anaphase. Plays a role in the assembly and stability of oocyte spindle, perhaps balancing the forces in the spindle and maintaining their morphology during metaphase. Plays a role in cell division and in embryonic viability up until gastrulation. Required for neuronal morphology and polarity and restricting ectopic process outgrowth; probably as a result of a role in maintaining microtubule integrity. Involved in maintaining neuronal microtubule number, length and packing. May promote axonal and synaptic growth. Plays a role in regulating thermotaxis responses in AFD thermosensory neurons. Required for touch sensitivity in adult touch response receptor neurons. This Caenorhabditis elegans protein is Serine/threonine-protein kinase zyg-8.